The chain runs to 804 residues: Protein-lysine N-methyltransferase SMYD4 (804 aa).

112-114 (RSA) contributes to the S-adenosyl-L-methionine binding site. The region spanning 233–574 (SSVGLCIDPL…KGQEILHCYG (342 aa)) is the SET domain. Residues Cys296, Cys299, Cys309, Cys312, Cys318, Cys322, His331, and Cys335 each contribute to the Zn(2+) site. The MYND-type zinc finger occupies 296–335 (CHRCLKHTLATVPCDGCSYAKYCSQECLQQAWELYHRTEC). Residues Asn427, 539 to 540 (NH), Tyr573, and Phe595 each bind S-adenosyl-L-methionine.

The protein belongs to the class V-like SAM-binding methyltransferase superfamily. Interacts (via MYND-type zinc finger) with HDAC1.

The protein localises to the nucleus. The protein resides in the cytoplasm. The enzyme catalyses L-lysyl-[protein] + S-adenosyl-L-methionine = N(6)-methyl-L-lysyl-[protein] + S-adenosyl-L-homocysteine + H(+). In terms of biological role, protein-lysine N-methyltransferase. Monomethylates PRMT5, modulating its transcriptional activity. May also act as a histone methyltransferase. Plays a critical role in cardiac development. Acts as a key epigenetic regulator of gene expression during cardiac development via its dual activities as a methyltransferase and negative regulator of HDAC1. The protein is Protein-lysine N-methyltransferase SMYD4 (SMYD4) of Pongo abelii (Sumatran orangutan).